We begin with the raw amino-acid sequence, 845 residues long: Alanine--tRNA ligase (845 aa).

His-552, His-556, Cys-653, and His-657 together coordinate Zn(2+).

This sequence belongs to the class-II aminoacyl-tRNA synthetase family. Requires Zn(2+) as cofactor.

It localises to the cytoplasm. The catalysed reaction is tRNA(Ala) + L-alanine + ATP = L-alanyl-tRNA(Ala) + AMP + diphosphate. Its function is as follows. Catalyzes the attachment of alanine to tRNA(Ala) in a two-step reaction: alanine is first activated by ATP to form Ala-AMP and then transferred to the acceptor end of tRNA(Ala). Also edits incorrectly charged Ser-tRNA(Ala) and Gly-tRNA(Ala) via its editing domain. The polypeptide is Alanine--tRNA ligase (Campylobacter fetus subsp. fetus (strain 82-40)).